The primary structure comprises 288 residues: Pantothenate synthetase (288 aa).

Position 30 to 37 (30 to 37) interacts with ATP; the sequence is MGFLHEGH. His37 serves as the catalytic Proton donor. Gln61 contributes to the (R)-pantoate binding site. Residue Gln61 participates in beta-alanine binding. 147-150 contacts ATP; sequence GLKD. Gln153 is a (R)-pantoate binding site. ATP contacts are provided by residues Val176 and 184–187; that span reads KSSR.

This sequence belongs to the pantothenate synthetase family. Homodimer.

It localises to the cytoplasm. The enzyme catalyses (R)-pantoate + beta-alanine + ATP = (R)-pantothenate + AMP + diphosphate + H(+). It functions in the pathway cofactor biosynthesis; (R)-pantothenate biosynthesis; (R)-pantothenate from (R)-pantoate and beta-alanine: step 1/1. In terms of biological role, catalyzes the condensation of pantoate with beta-alanine in an ATP-dependent reaction via a pantoyl-adenylate intermediate. This chain is Pantothenate synthetase, found in Bacillus pumilus (strain SAFR-032).